The sequence spans 546 residues: DDB1- and CUL4-associated factor 11 (546 aa).

Residues 1–19 (MGSRNSSSAGSGSGDPSEG) show a composition bias toward low complexity. The tract at residues 1–40 (MGSRNSSSAGSGSGDPSEGLTRRGAGLRRSEEEEEEDEDV) is disordered. The residue at position 75 (Ser75) is a Phosphoserine. WD repeat units lie at residues 170–210 (SYSQ…RKFK), 216–258 (DVGW…TALD), 263–302 (ERRF…RTLQ), 305–345 (SHED…EDDP), 353–392 (GHQD…SREG), 435–480 (GVLH…KKLT), and 481–520 (NHKA…YFQD). Residues 523 to 546 (PESEECASAPAPVPRSSTPFSSPQ) form a disordered region. The span at 537–546 (RSSTPFSSPQ) shows a compositional bias: polar residues.

In terms of assembly, interacts with DDB1 and CUL4A.

It functions in the pathway protein modification; protein ubiquitination. Its function is as follows. May function as a substrate receptor for CUL4-DDB1 E3 ubiquitin-protein ligase complex. The polypeptide is DDB1- and CUL4-associated factor 11 (DCAF11) (Pongo abelii (Sumatran orangutan)).